A 182-amino-acid polypeptide reads, in one-letter code: ATP synthase subunit delta (182 aa).

Belongs to the ATPase delta chain family. As to quaternary structure, F-type ATPases have 2 components, F(1) - the catalytic core - and F(0) - the membrane proton channel. F(1) has five subunits: alpha(3), beta(3), gamma(1), delta(1), epsilon(1). F(0) has three main subunits: a(1), b(2) and c(10-14). The alpha and beta chains form an alternating ring which encloses part of the gamma chain. F(1) is attached to F(0) by a central stalk formed by the gamma and epsilon chains, while a peripheral stalk is formed by the delta and b chains.

Its subcellular location is the cell inner membrane. F(1)F(0) ATP synthase produces ATP from ADP in the presence of a proton or sodium gradient. F-type ATPases consist of two structural domains, F(1) containing the extramembraneous catalytic core and F(0) containing the membrane proton channel, linked together by a central stalk and a peripheral stalk. During catalysis, ATP synthesis in the catalytic domain of F(1) is coupled via a rotary mechanism of the central stalk subunits to proton translocation. Functionally, this protein is part of the stalk that links CF(0) to CF(1). It either transmits conformational changes from CF(0) to CF(1) or is implicated in proton conduction. The protein is ATP synthase subunit delta of Histophilus somni (strain 129Pt) (Haemophilus somnus).